The following is a 178-amino-acid chain: PRA1 family protein 2 (178 aa).

The Cytoplasmic segment spans residues 1-41; the sequence is MSEVRLPPLRALDDFVLGSARLAAPDPCDPQRWCHRVINNL. The helical transmembrane segment at 42–62 threads the bilayer; sequence LYYQTNYLLCFGIGLALAGYV. The Extracellular portion of the chain corresponds to 63-64; the sequence is RP. A helical transmembrane segment spans residues 65-85; the sequence is LHTLLSALVVAVALGMLVWAA. Residues 86–96 lie on the Cytoplasmic side of the membrane; the sequence is ETRAAVRRCRR. Residues 97–119 traverse the membrane as a helical segment; that stretch reads SHPAACLAAVLAVGLLVLWVVGG. The Extracellular segment spans residues 120–122; the sequence is ACT. A helical membrane pass occupies residues 123 to 140; it reads FLLSIAGPVLLILVHASL. Residues 141–178 lie on the Cytoplasmic side of the membrane; the sequence is RLRNLKNKIENKIESIGLKRTPMGLLLEALGQEQEAGS.

Belongs to the PRA1 family. As to quaternary structure, interacts with CCR5 and GDE1.

The protein localises to the endosome membrane. Functionally, may be involved in ER/Golgi transport and vesicular traffic. Plays a proapoptotic role in cerulenin-induced neuroblastoma apoptosis. The protein is PRA1 family protein 2 (PRAF2) of Macaca fascicularis (Crab-eating macaque).